The sequence spans 260 residues: uncharacterized protein (260 aa).

This is an uncharacterized protein from Methanocaldococcus jannaschii (strain ATCC 43067 / DSM 2661 / JAL-1 / JCM 10045 / NBRC 100440) (Methanococcus jannaschii).